The sequence spans 802 residues: Leucine--tRNA ligase (802 aa).

A 'HIGH' region motif is present at residues 40-51 (PYPSGAGLHVGH). The short motif at 576-580 (KMSKS) is the 'KMSKS' region element. ATP is bound at residue K579.

It belongs to the class-I aminoacyl-tRNA synthetase family.

Its subcellular location is the cytoplasm. It carries out the reaction tRNA(Leu) + L-leucine + ATP = L-leucyl-tRNA(Leu) + AMP + diphosphate. The polypeptide is Leucine--tRNA ligase (Bacillus cereus (strain B4264)).